A 157-amino-acid polypeptide reads, in one-letter code: Phosphopantetheine adenylyltransferase (157 aa).

Position 8 (threonine 8) interacts with substrate. ATP-binding positions include 8–9 (TF) and histidine 16. Substrate-binding residues include lysine 40, threonine 72, and arginine 86. Residues 87–89 (GLR), glutamate 97, and 122–128 (YSFLSSS) each bind ATP.

It belongs to the bacterial CoaD family. As to quaternary structure, homohexamer. It depends on Mg(2+) as a cofactor.

It is found in the cytoplasm. It catalyses the reaction (R)-4'-phosphopantetheine + ATP + H(+) = 3'-dephospho-CoA + diphosphate. The protein operates within cofactor biosynthesis; coenzyme A biosynthesis; CoA from (R)-pantothenate: step 4/5. Functionally, reversibly transfers an adenylyl group from ATP to 4'-phosphopantetheine, yielding dephospho-CoA (dPCoA) and pyrophosphate. The chain is Phosphopantetheine adenylyltransferase from Prochlorococcus marinus (strain MIT 9215).